A 155-amino-acid chain; its full sequence is SsrA-binding protein (155 aa).

The segment covering 123–142 has biased composition (basic and acidic residues); sequence DLHDKRETEKKRDWEREKGQ. Residues 123–155 form a disordered region; sequence DLHDKRETEKKRDWEREKGQLMRHKISSPRKDT. The segment covering 143–155 has biased composition (basic residues); sequence LMRHKISSPRKDT.

The protein belongs to the SmpB family.

It is found in the cytoplasm. In terms of biological role, required for rescue of stalled ribosomes mediated by trans-translation. Binds to transfer-messenger RNA (tmRNA), required for stable association of tmRNA with ribosomes. tmRNA and SmpB together mimic tRNA shape, replacing the anticodon stem-loop with SmpB. tmRNA is encoded by the ssrA gene; the 2 termini fold to resemble tRNA(Ala) and it encodes a 'tag peptide', a short internal open reading frame. During trans-translation Ala-aminoacylated tmRNA acts like a tRNA, entering the A-site of stalled ribosomes, displacing the stalled mRNA. The ribosome then switches to translate the ORF on the tmRNA; the nascent peptide is terminated with the 'tag peptide' encoded by the tmRNA and targeted for degradation. The ribosome is freed to recommence translation, which seems to be the essential function of trans-translation. The sequence is that of SsrA-binding protein from Methylibium petroleiphilum (strain ATCC BAA-1232 / LMG 22953 / PM1).